The following is a 203-amino-acid chain: Dephospho-CoA kinase (203 aa).

Positions 6 to 203 (KVAITGGLSC…ELYQELKIYI (198 aa)) constitute a DPCK domain. Residue 14–19 (SCGKSS) participates in ATP binding.

Belongs to the CoaE family.

It is found in the cytoplasm. The enzyme catalyses 3'-dephospho-CoA + ATP = ADP + CoA + H(+). It functions in the pathway cofactor biosynthesis; coenzyme A biosynthesis; CoA from (R)-pantothenate: step 5/5. Its function is as follows. Catalyzes the phosphorylation of the 3'-hydroxyl group of dephosphocoenzyme A to form coenzyme A. The polypeptide is Dephospho-CoA kinase (Protochlamydia amoebophila (strain UWE25)).